The chain runs to 297 residues: GTPase Era (297 aa).

Residues 3 to 171 form the Era-type G domain; that stretch reads KSGFVSIVGR…IKVIQNYLEE (169 aa). A G1 region spans residues 11 to 18; the sequence is GRPNVGKS. Residue 11–18 participates in GTP binding; that stretch reads GRPNVGKS. The G2 stretch occupies residues 37–41; that stretch reads QTTRN. Residues 58–61 form a G3 region; sequence DTPG. GTP contacts are provided by residues 58–62 and 120–123; these read DTPGI and NKID. The tract at residues 120 to 123 is G4; that stretch reads NKID. The G5 stretch occupies residues 150–152; it reads ISA. The KH type-2 domain occupies 194–280; sequence IREKVLHYLN…NLQLWVKVKE (87 aa).

It belongs to the TRAFAC class TrmE-Era-EngA-EngB-Septin-like GTPase superfamily. Era GTPase family. In terms of assembly, monomer.

It is found in the cytoplasm. The protein resides in the cell membrane. Its function is as follows. An essential GTPase that binds both GDP and GTP, with rapid nucleotide exchange. Plays a role in 16S rRNA processing and 30S ribosomal subunit biogenesis and possibly also in cell cycle regulation and energy metabolism. This Clostridioides difficile (strain 630) (Peptoclostridium difficile) protein is GTPase Era.